The chain runs to 3419 residues: Utrophin (3419 aa).

The actin-binding stretch occupies residues 1 to 246 (MAKYGHLEAS…LPDKKSIIMY (246 aa)). At Tyr4 the chain carries Phosphotyrosine. Phosphoserine is present on Ser10. Calponin-homology (CH) domains are found at residues 31 to 135 (DVQK…LHWQ) and 150 to 255 (TNSE…EVLP). The interval 268 to 905 (TLPRKYKKEC…YQQQLENELK (638 aa)) is interaction with SYNM. A Phosphoserine modification is found at Ser295. Spectrin repeat units lie at residues 312–416 (DSYQ…SRLH), 421–525 (ELQK…NRLQ), 532–636 (QELL…NQVT), 690–795 (KKFD…RKIQ), 801–901 (NAYF…QQLE), 910–1012 (PAYL…RSLE), 1019–1121 (RDFK…SRLS), 1128–1229 (MNLK…HTLE), 1236–1333 (VELL…ISLE), 1335–1436 (QLQV…LFQK), 1438–1540 (ANFE…QDLE), 1547–1648 (RKLK…NTLL), 1653–1747 (QLEV…INSA), 1748–1840 (QMLI…KIKA), 1841–1958 (IPQR…SDRR), 1969–2070 (KQFH…PRLK), and 2077–2176 (SGYR…KTRT). Residues 1336 to 1761 (LQVLRETDHM…GQDPAGTVEA (426 aa)) are interaction with SYNM. Phosphoserine is present on Ser1998. Ser2201 carries the phosphoserine modification. 5 Spectrin repeats span residues 2216 to 2319 (ADLD…QQLE), 2336 to 2426 (EELM…SALE), 2433 to 2542 (QTSR…AHLE), 2549 to 2674 (NRLL…KQVG), and 2681 to 2783 (RDLQ…KQLQ). Residues 2616–2640 (DQPIEAPEEPRRNPQSKTELTPEER) form a disordered region. The interval 2785–3152 (AHRDFGPSSQ…TVLEGDNLET (368 aa)) is interaction with SYNM. Residues 2799–2832 (TSVQLPWQRSISHNKVPYYINHQTQTTCWDHPKM) enclose the WW domain. A ZZ-type; degenerate zinc finger spans residues 3052-3108 (KHQAKCNICKECPIVGFRYRSLKHFNYDVCQSCFFSGRTAKGHKLHYPMVEYCIPTT). Cys3057, Cys3060, Cys3081, and Cys3084 together coordinate Zn(2+). Disordered stretches follow at residues 3277 to 3296 (RRGL…YHTS) and 3344 to 3395 (DSDS…TDLT). Position 3284 is a phosphoserine (Ser3284).

As to quaternary structure, homodimer. Interacts with the syntrophins SNTA1; SNTB1 and SNTB2. Interacts with SYNM. Interacts (via its WWW and ZZ domains) with DAG1 (via the PPXY motif of betaDAG1); the interaction is inhibited by the tyrosine phosphorylation of the PPXY motif of DAG1. Interacts with DTNB. Interacts with PGM5.

Its subcellular location is the postsynaptic cell membrane. The protein resides in the cytoplasm. It localises to the cytoskeleton. In terms of biological role, may play a role in anchoring the cytoskeleton to the plasma membrane. The protein is Utrophin of Rattus norvegicus (Rat).